The chain runs to 48 residues: MAKRKANHVINGMNNAKRQGNGAGYIENDQHILTEAERQNNKKRKTNQ.

The interval 1–48 is disordered; it reads MAKRKANHVINGMNNAKRQGNGAGYIENDQHILTEAERQNNKKRKTNQ. The segment covering 28 to 40 has biased composition (basic and acidic residues); that stretch reads NDQHILTEAERQN.

Belongs to the SspO family.

The protein resides in the spore core. This is Small, acid-soluble spore protein O from Bacillus licheniformis (strain ATCC 14580 / DSM 13 / JCM 2505 / CCUG 7422 / NBRC 12200 / NCIMB 9375 / NCTC 10341 / NRRL NRS-1264 / Gibson 46).